The chain runs to 210 residues: Calcineurin B-like protein 4 (210 aa).

Gly2 is lipidated: N-myristoyl glycine. EF-hand domains lie at 31 to 66 (EVEA…RNSR), 67 to 102 (KANL…FHPK), 104 to 139 (PKSE…LLDE), and 148 to 183 (AVEA…NPAS). Residues Asp161, Asn163, Asp165, Arg167, and Glu172 each contribute to the Ca(2+) site.

The protein belongs to the calcineurin regulatory subunit family. Homodimer. Interacts with CIPK24. Expressed in leaves.

It is found in the cell membrane. Functionally, acts as a calcium sensor involved in the regulatory pathway for the control of intracellular Na(+) and K(+) homeostasis and salt tolerance. Operates in synergy with CIPK24 to activate the plasma membrane Na(+)/H(+) antiporter SOS1. May function as positive regulator of salt stress responses. CBL proteins interact with CIPK serine-threonine protein kinases. Binding of a CBL protein to the regulatory NAF domain of a CIPK protein lead to the activation of the kinase in a calcium-dependent manner. The sequence is that of Calcineurin B-like protein 4 (CBL4) from Oryza sativa subsp. japonica (Rice).